The sequence spans 211 residues: uncharacterized protein (211 aa).

The protein belongs to the A.longa ORF167/ORF288 family.

The protein resides in the plastid. This is an uncharacterized protein from Euglena longa (Euglenophycean alga).